We begin with the raw amino-acid sequence, 296 residues long: 4-diphosphocytidyl-2-C-methyl-D-erythritol kinase (296 aa).

The active site involves Lys-13. ATP is bound at residue 98–108 (PVAAGIGGGSA). Asp-140 is an active-site residue.

The protein belongs to the GHMP kinase family. IspE subfamily.

The enzyme catalyses 4-CDP-2-C-methyl-D-erythritol + ATP = 4-CDP-2-C-methyl-D-erythritol 2-phosphate + ADP + H(+). The protein operates within isoprenoid biosynthesis; isopentenyl diphosphate biosynthesis via DXP pathway; isopentenyl diphosphate from 1-deoxy-D-xylulose 5-phosphate: step 3/6. Catalyzes the phosphorylation of the position 2 hydroxy group of 4-diphosphocytidyl-2C-methyl-D-erythritol. This Rhodopseudomonas palustris (strain HaA2) protein is 4-diphosphocytidyl-2-C-methyl-D-erythritol kinase.